The sequence spans 687 residues: Dictomallein (687 aa).

Disordered regions lie at residues 1-45 and 73-112; these read MGNG…SRRL and TAGG…STSA. The Peptidase M66 domain maps to 233 to 501; the sequence is PVFGTDADVQ…QAWIASRVLA (269 aa). Histidine 393 provides a ligand contact to Zn(2+). Glutamate 394 is an active-site residue. The Zn(2+) site is built by histidine 397 and histidine 403.

Belongs to the dictomallein family. Zn(2+) serves as cofactor.

This Burkholderia pseudomallei (strain 1710b) protein is Dictomallein (dtmL).